We begin with the raw amino-acid sequence, 207 residues long: Outer-membrane lipoprotein LolB (207 aa).

Residues 1–21 (MPMRKRHFYRLLPLASLLLAA) form the signal peptide. C22 carries the N-palmitoyl cysteine lipid modification. The S-diacylglycerol cysteine moiety is linked to residue C22.

The protein belongs to the LolB family. Monomer.

It is found in the cell outer membrane. Its function is as follows. Plays a critical role in the incorporation of lipoproteins in the outer membrane after they are released by the LolA protein. The protein is Outer-membrane lipoprotein LolB of Yersinia pestis bv. Antiqua (strain Antiqua).